Here is a 204-residue protein sequence, read N- to C-terminus: MASTTVWNPAAGVGSLKNSEKYLIDPDDFVGVLALSPCTVFKQGLFVEMSGLRLRALLTATKPAEPKRAVLHRSKRNVCLKACADGSINLAKALSSLRMPLCMVKIMTELSNASAPRGGMYRKRFEFTCYLGNVVSCTKCKSACLIDALLHFYKMDPKCVGEVMHLLIKAEDVYKPSNCVKMKAVNKLCPKAGTCKGKNPICNF.

The protein belongs to the baculoviridae LEF-2 family.

Functionally, required for late and very late gene expression. Specifically required for expression from the vp39 and polh promoters. The sequence is that of Late expression factor 2 (LEF-2) from Anticarsia gemmatalis nuclear polyhedrosis virus (AgMNPV).